A 360-amino-acid chain; its full sequence is Peptide chain release factor 1 (360 aa).

Position 235 is an N5-methylglutamine (Gln235). Positions 285–295 (RQAAEQTDMRR) are enriched in basic and acidic residues. Residues 285-309 (RQAAEQTDMRRNLLGSGDRSDKIRT) are disordered.

The protein belongs to the prokaryotic/mitochondrial release factor family. Post-translationally, methylated by PrmC. Methylation increases the termination efficiency of RF1.

The protein localises to the cytoplasm. Its function is as follows. Peptide chain release factor 1 directs the termination of translation in response to the peptide chain termination codons UAG and UAA. The sequence is that of Peptide chain release factor 1 from Haemophilus influenzae (strain 86-028NP).